We begin with the raw amino-acid sequence, 175 residues long: Shikimate kinase (175 aa).

14 to 19 (GAGKST) contacts ATP. Mg(2+) is bound at residue S18. Substrate contacts are provided by D36, R60, and G82. An ATP-binding site is contributed by R120. R140 contributes to the substrate binding site. An ATP-binding site is contributed by Q157.

The protein belongs to the shikimate kinase family. In terms of assembly, monomer. Requires Mg(2+) as cofactor.

It localises to the cytoplasm. The catalysed reaction is shikimate + ATP = 3-phosphoshikimate + ADP + H(+). It functions in the pathway metabolic intermediate biosynthesis; chorismate biosynthesis; chorismate from D-erythrose 4-phosphate and phosphoenolpyruvate: step 5/7. Catalyzes the specific phosphorylation of the 3-hydroxyl group of shikimic acid using ATP as a cosubstrate. The protein is Shikimate kinase of Histophilus somni (strain 2336) (Haemophilus somnus).